A 343-amino-acid polypeptide reads, in one-letter code: CMP-N-acetylneuraminate-beta-galactosamide-alpha-2,3-sialyltransferase 1 (343 aa).

Over 1–11 the chain is Cytoplasmic; that stretch reads MAPMRKKSTLK. A helical; Signal-anchor for type II membrane protein transmembrane segment spans residues 12–27; it reads LLTLLVLFIFLTSFFL. The N-linked (GlcNAc...) asparagine glycan is linked to Asn-28. Topologically, residues 28–343 are lumenal; sequence NYSHTVVTTA…INKIRIFKGR (316 aa). 3 disulfide bridges follow: Cys-62-Cys-67, Cys-64-Cys-142, and Cys-145-Cys-284. The N-linked (GlcNAc...) asparagine glycan is linked to Asn-82. Gln-108 lines the substrate pocket. An N-linked (GlcNAc...) asparagine glycan is attached at Asn-117. Asn-150, Asn-173, Tyr-233, Tyr-269, Gly-273, Gly-293, His-302, and His-319 together coordinate substrate. Asn-326 is a glycosylation site (N-linked (GlcNAc...) asparagine).

It belongs to the glycosyltransferase 29 family. The soluble form derives from the membrane form by proteolytic processing. As to expression, the long isoform is abundant in salivary gland, liver, lung, and colon mucosa. Both long and short forms are detected in submaxillary salivary glands.

Its subcellular location is the golgi apparatus. It localises to the golgi stack membrane. The protein localises to the trans-Golgi network membrane. It is found in the secreted. The enzyme catalyses a beta-D-galactosyl-(1-&gt;3)-N-acetyl-alpha-D-galactosaminyl derivative + CMP-N-acetyl-beta-neuraminate = an N-acetyl-alpha-neuraminyl-(2-&gt;3)-beta-D-galactosyl-(1-&gt;3)-N-acetyl-alpha-D-galactosaminyl derivative + CMP + H(+). It carries out the reaction a ganglioside GM1 (d18:1(4E)) + CMP-N-acetyl-beta-neuraminate = a ganglioside GD1a (d18:1(4E)) + CMP + H(+). The catalysed reaction is ganglioside GM1 (d18:1(4E)/18:0) + CMP-N-acetyl-beta-neuraminate = ganglioside GD1a (18:1(4E)/18:0) + CMP + H(+). It catalyses the reaction a ganglioside GA1 (d18:1(4E)) + CMP-N-acetyl-beta-neuraminate = a ganglioside GM1b (d18:1(4E)) + CMP + H(+). The enzyme catalyses a ganglioside GD1b + CMP-N-acetyl-beta-neuraminate = a ganglioside GT1b + CMP + H(+). It carries out the reaction a 3-O-[beta-D-galactosyl-(1-&gt;3)-N-acetyl-alpha-D-galactosaminyl]-L-threonyl-[protein] + CMP-N-acetyl-beta-neuraminate = a 3-O-[N-acetyl-alpha-neuraminyl-(2-&gt;3)-beta-D-galactosyl-(1-&gt;3)-N-acetyl-alpha-D-galactosaminyl]-L-threonyl-[protein] + CMP + H(+). The catalysed reaction is a 3-O-[beta-D-galactosyl-(1-&gt;3)-N-acetyl-alpha-D-galactosaminyl]-L-seryl-[protein] + CMP-N-acetyl-beta-neuraminate = 3-O-[N-acetyl-alpha-neuraminyl-(2-&gt;3)-beta-D-galactosyl-(1-&gt;3)-N-acetyl-alpha-D-galactosaminyl]-L-seryl-[protein] + CMP + H(+). Its pathway is protein modification; protein glycosylation. It functions in the pathway glycolipid biosynthesis. Its function is as follows. A beta-galactoside alpha2-&gt;3 sialyltransferase involved in terminal sialylation of glycoproteins and glycolipids. Catalyzes the transfer of sialic acid (N-acetyl-neuraminic acid; Neu5Ac) from the nucleotide sugar donor CMP-Neu5Ac onto acceptor Galbeta-(1-&gt;3)-GalNAc-terminated glycoconjugates through an alpha2-3 linkage. Adds sialic acid to the core 1 O-glycan, Galbeta-(1-&gt;3)-GalNAc-O-Ser/Thr, which is a major structure of mucin-type O-glycans. As part of a homeostatic mechanism that regulates CD8-positive T cell numbers, sialylates core 1 O-glycans of T cell glycoproteins, SPN/CD43 and PTPRC/CD45. Prevents premature apoptosis of thymic CD8-positive T cells prior to peripheral emigration, whereas in the secondary lymphoid organs controls the survival of CD8-positive memory T cells generated following a successful immune response. Transfers sialic acid to asialofetuin, presumably onto Galbeta-(1-&gt;3)-GalNAc-O-Ser. Sialylates GM1a, GA1 and GD1b gangliosides to form GD1a, GM1b and GT1b, respectively. The sequence is that of CMP-N-acetylneuraminate-beta-galactosamide-alpha-2,3-sialyltransferase 1 (ST3GAL1) from Sus scrofa (Pig).